Consider the following 200-residue polypeptide: Holliday junction branch migration complex subunit RuvA (200 aa).

The domain I stretch occupies residues 1-64; the sequence is MIGHLRGIIV…EDAHTLYGFH (64 aa). The domain II stretch occupies residues 65–143; that stretch reads NDHERRLFRA…RWHTNDTPSP (79 aa). The interval 133–152 is disordered; that stretch reads SRWHTNDTPSPEGLRSSNTQ. Residues 144 to 148 form a flexible linker region; sequence EGLRS. The interval 149–200 is domain III; that stretch reads SNTQPTQDAISALMALGYKPQEAKRAIDAIQKPDLSAETLIRLALKQMVLGT.

The protein belongs to the RuvA family. Homotetramer. Forms an RuvA(8)-RuvB(12)-Holliday junction (HJ) complex. HJ DNA is sandwiched between 2 RuvA tetramers; dsDNA enters through RuvA and exits via RuvB. An RuvB hexamer assembles on each DNA strand where it exits the tetramer. Each RuvB hexamer is contacted by two RuvA subunits (via domain III) on 2 adjacent RuvB subunits; this complex drives branch migration. In the full resolvosome a probable DNA-RuvA(4)-RuvB(12)-RuvC(2) complex forms which resolves the HJ.

It localises to the cytoplasm. In terms of biological role, the RuvA-RuvB-RuvC complex processes Holliday junction (HJ) DNA during genetic recombination and DNA repair, while the RuvA-RuvB complex plays an important role in the rescue of blocked DNA replication forks via replication fork reversal (RFR). RuvA specifically binds to HJ cruciform DNA, conferring on it an open structure. The RuvB hexamer acts as an ATP-dependent pump, pulling dsDNA into and through the RuvAB complex. HJ branch migration allows RuvC to scan DNA until it finds its consensus sequence, where it cleaves and resolves the cruciform DNA. The chain is Holliday junction branch migration complex subunit RuvA from Coxiella burnetii (strain Dugway 5J108-111).